A 363-amino-acid polypeptide reads, in one-letter code: MNELLLNLVDPLHQWFLGLGDGGVVLWSVLKILLIAVPVIVAVAFYVVWERKLIGWMHVRHGPMYVGMGIFQAFADVFKLLFKEIVQPTSSHKAMFVIAPLLTLAPAFAAWSVVPFDAKLVLSNANVGLLYLLAMTSLGVYGIILAGWASNSKYAFLGAMRSAAQVVSYEIAMGFALVGVMIASGSVNLSQIVFAQAGNSGFFDWFLIPLFPLFIVYWVSGVAETNRAPFDVVEGESEIVAGHMVEYSGGAFALFFLAEYANMILVSFLISIFFLGGWLSPIQGWVNADVSPWIDWLWKGGWPWLLMKVFFFASAYIWFRASFPRYRYDQIMRLGWKVFIPLTIVWIAVTALMVFYGVIQKGV.

10 helical membrane passes run 29 to 49 (VLKILLIAVPVIVAVAFYVVW), 62 to 82 (GPMYVGMGIFQAFADVFKLLF), 96 to 116 (FVIAPLLTLAPAFAAWSVVPF), 127 to 147 (VGLLYLLAMTSLGVYGIILAG), 163 to 183 (AAQVVSYEIAMGFALVGVMIA), 202 to 222 (FFDWFLIPLFPLFIVYWVSGV), 238 to 257 (EIVAGHMVEYSGGAFALFFL), 264 to 286 (ILVSFLISIFFLGGWLSPIQGWV), 299 to 319 (KGGWPWLLMKVFFFASAYIWF), and 339 to 359 (FIPLTIVWIAVTALMVFYGVI).

It belongs to the complex I subunit 1 family. In terms of assembly, NDH-1 is composed of 14 different subunits. Subunits NuoA, H, J, K, L, M, N constitute the membrane sector of the complex.

Its subcellular location is the cell inner membrane. The catalysed reaction is a quinone + NADH + 5 H(+)(in) = a quinol + NAD(+) + 4 H(+)(out). Its function is as follows. NDH-1 shuttles electrons from NADH, via FMN and iron-sulfur (Fe-S) centers, to quinones in the respiratory chain. The immediate electron acceptor for the enzyme in this species is believed to be ubiquinone. Couples the redox reaction to proton translocation (for every two electrons transferred, four hydrogen ions are translocated across the cytoplasmic membrane), and thus conserves the redox energy in a proton gradient. This subunit may bind ubiquinone. In Xanthomonas euvesicatoria pv. vesicatoria (strain 85-10) (Xanthomonas campestris pv. vesicatoria), this protein is NADH-quinone oxidoreductase subunit H.